Reading from the N-terminus, the 294-residue chain is MVLSSNWLSLQKSTDSDSVNKNKGGKKTKSNSKKRTVSVKKDKQYVDKKKKNGTGSKIMDMVANMNREIAKVEQERTKNTHADGQMINSEDRFESVLKQKLNEDVAKKSLSRTNGVGKYVSMDCEFVGVGPDGKDSALARVSIVNYYGNVVLDLFVRPKEPVTDWRTWVSGIKPHHMANAVTQEDCQKQVSNVLKGRILVGHSVHHDLTALMLSHPRRMIRDTSRHMPFRQKYSEGKTPSLKKLTKEILQLDIQDGEHSSIEDARATMLLYKSDKLEFEKLHNKQFGPSKPTQE.

Residues 1-13 are compositionally biased toward polar residues; the sequence is MVLSSNWLSLQKS. Residues 1 to 56 are disordered; sequence MVLSSNWLSLQKSTDSDSVNKNKGGKKTKSNSKKRTVSVKKDKQYVDKKKKNGTGS. The segment covering 23 to 38 has biased composition (basic residues); that stretch reads KGGKKTKSNSKKRTVS. The Exonuclease domain occupies 119–271; the sequence is YVSMDCEFVG…EDARATMLLY (153 aa).

It belongs to the REXO4 family.

Its subcellular location is the nucleus. Its function is as follows. Exoribonuclease involved in ribosome biosynthesis. Involved in the processing of ITS1, the internal transcribed spacer localized between the 18S and 5.8S rRNAs. The protein is RNA exonuclease 4 (REX4) of Kluyveromyces lactis (strain ATCC 8585 / CBS 2359 / DSM 70799 / NBRC 1267 / NRRL Y-1140 / WM37) (Yeast).